A 573-amino-acid polypeptide reads, in one-letter code: MAGSPGNELPLLQLQEVDSSKVGESGGSSGLLPTMYNGALPALSMESHAVCIPSPYTDSSHDYAALTFYSPPILSHGGPAVPESPAARQSLSPSLFWPAHGHHGHVSPLALHFQQPLVYREPAHSPWAEPKPLEHGQAQTSKLAGKRMAESEEGTSSVGGCFAGKGDMHFCAVCHDYASGYHYGVWSCEGCKAFFKRSIQGHNGYICPATNQCTIDKNRRKSCQACRLRKCYEVGMMKCGVRRERCTYRGARHRRMPHIRELAGTGGGARTQRRGEGVVPQTQEAQSSALTPEQLINRIIEAEPPEIYLMKELKKPFTEDSMMMSLTNLADKELVLMISWAKKIPGFVELDLSDQVHLLECCWLEVLMLGLMWRSVDHPGKLIFSPDLKLNRDEGSCVEGILEIFDMVLAATSRFRELKLQREEYVCLKAIILLNPNLCTTSSENREELESRNKLLHMLDSVTDALVWTIAKKGLTFQQQSARLAHLLMLLAHIRHLSNKGMEHLSNMKRKNVVPLYDLLLEMLDANTMHSSRMSASYSSQPSPWSQAAQSQPGPPPSCSGECPCPPKESSTI.

The tract at residues 15-170 is modulating; sequence QEVDSSKVGE…CFAGKGDMHF (156 aa). NR C4-type zinc fingers lie at residues 171–191 and 207–231; these read CAVC…CEGC and CPAT…LRKC. The nuclear receptor DNA-binding region spans 171 to 236; that stretch reads CAVCHDYASG…RLRKCYEVGM (66 aa). Residues 291 to 527 enclose the NR LBD domain; that stretch reads TPEQLINRII…DLLLEMLDAN (237 aa). Low complexity-rich tracts occupy residues 534 to 552 and 559 to 573; these read MSAS…AQSQ and CSGE…SSTI. The segment at 534 to 573 is disordered; the sequence is MSASYSSQPSPWSQAAQSQPGPPPSCSGECPCPPKESSTI.

Belongs to the nuclear hormone receptor family. NR3 subfamily. Binds DNA as a homodimer. Can form a heterodimer with ER-alpha. Liver.

It is found in the nucleus. Binds estrogens with an affinity similar to that of ER-alpha, and activates expression of reporter genes containing estrogen response elements (ERE) in an estrogen-dependent manner. The protein is Estrogen receptor beta (esr2) of Anguilla japonica (Japanese eel).